The primary structure comprises 418 residues: Gamma-glutamyl phosphate reductase (418 aa).

This sequence belongs to the gamma-glutamyl phosphate reductase family.

It is found in the cytoplasm. It catalyses the reaction L-glutamate 5-semialdehyde + phosphate + NADP(+) = L-glutamyl 5-phosphate + NADPH + H(+). It participates in amino-acid biosynthesis; L-proline biosynthesis; L-glutamate 5-semialdehyde from L-glutamate: step 2/2. Functionally, catalyzes the NADPH-dependent reduction of L-glutamate 5-phosphate into L-glutamate 5-semialdehyde and phosphate. The product spontaneously undergoes cyclization to form 1-pyrroline-5-carboxylate. The chain is Gamma-glutamyl phosphate reductase from Agathobacter rectalis (strain ATCC 33656 / DSM 3377 / JCM 17463 / KCTC 5835 / VPI 0990) (Eubacterium rectale).